The chain runs to 109 residues: Large ribosomal subunit protein uL22 (109 aa).

Residues 84–95 (ARGTASRIRKPT) show a composition bias toward basic residues. A disordered region spans residues 84–109 (ARGTASRIRKPTSHIMVEVSKPSKEA).

The protein belongs to the universal ribosomal protein uL22 family. In terms of assembly, part of the 50S ribosomal subunit.

In terms of biological role, this protein binds specifically to 23S rRNA; its binding is stimulated by other ribosomal proteins, e.g. L4, L17, and L20. It is important during the early stages of 50S assembly. It makes multiple contacts with different domains of the 23S rRNA in the assembled 50S subunit and ribosome. Its function is as follows. The globular domain of the protein is located near the polypeptide exit tunnel on the outside of the subunit, while an extended beta-hairpin is found that lines the wall of the exit tunnel in the center of the 70S ribosome. The protein is Large ribosomal subunit protein uL22 of Campylobacter hominis (strain ATCC BAA-381 / DSM 21671 / CCUG 45161 / LMG 19568 / NCTC 13146 / CH001A).